The sequence spans 459 residues: Bifunctional protein GlmU (459 aa).

Positions 1–230 are pyrophosphorylase; it reads MSNRFAVILA…FDETLGVNDR (230 aa). UDP-N-acetyl-alpha-D-glucosamine contacts are provided by residues 9 to 12, Lys-23, Gln-73, and 78 to 79; these read LAAG and GT. A Mg(2+)-binding site is contributed by Asp-103. Gly-140, Glu-155, Asn-170, and Asn-228 together coordinate UDP-N-acetyl-alpha-D-glucosamine. Mg(2+) is bound at residue Asn-228. The interval 231–251 is linker; it reads VALSQAEIIMKNRINRKNMVN. An N-acetyltransferase region spans residues 252 to 459; the sequence is GVTIIDPSNT…VDQLLNKKKS (208 aa). Residues Arg-333 and Lys-351 each coordinate UDP-N-acetyl-alpha-D-glucosamine. Catalysis depends on His-363, which acts as the Proton acceptor. Residues Tyr-366 and Asn-377 each coordinate UDP-N-acetyl-alpha-D-glucosamine. Residues 386 to 387, Ala-423, and Arg-440 contribute to the acetyl-CoA site; that span reads NY.

The protein in the N-terminal section; belongs to the N-acetylglucosamine-1-phosphate uridyltransferase family. This sequence in the C-terminal section; belongs to the transferase hexapeptide repeat family. In terms of assembly, homotrimer. Requires Mg(2+) as cofactor.

The protein resides in the cytoplasm. The catalysed reaction is alpha-D-glucosamine 1-phosphate + acetyl-CoA = N-acetyl-alpha-D-glucosamine 1-phosphate + CoA + H(+). It carries out the reaction N-acetyl-alpha-D-glucosamine 1-phosphate + UTP + H(+) = UDP-N-acetyl-alpha-D-glucosamine + diphosphate. Its pathway is nucleotide-sugar biosynthesis; UDP-N-acetyl-alpha-D-glucosamine biosynthesis; N-acetyl-alpha-D-glucosamine 1-phosphate from alpha-D-glucosamine 6-phosphate (route II): step 2/2. It functions in the pathway nucleotide-sugar biosynthesis; UDP-N-acetyl-alpha-D-glucosamine biosynthesis; UDP-N-acetyl-alpha-D-glucosamine from N-acetyl-alpha-D-glucosamine 1-phosphate: step 1/1. The protein operates within bacterial outer membrane biogenesis; LPS lipid A biosynthesis. Functionally, catalyzes the last two sequential reactions in the de novo biosynthetic pathway for UDP-N-acetylglucosamine (UDP-GlcNAc). The C-terminal domain catalyzes the transfer of acetyl group from acetyl coenzyme A to glucosamine-1-phosphate (GlcN-1-P) to produce N-acetylglucosamine-1-phosphate (GlcNAc-1-P), which is converted into UDP-GlcNAc by the transfer of uridine 5-monophosphate (from uridine 5-triphosphate), a reaction catalyzed by the N-terminal domain. In Bacillus cereus (strain G9842), this protein is Bifunctional protein GlmU.